Reading from the N-terminus, the 472-residue chain is Homeobox protein PKNOX2 (472 aa).

Residues 1–62 (MMQHASPAPA…STPVPSAPID (62 aa)) are disordered. A compositionally biased stretch (polar residues) spans 26–38 (DSPQMTATAQPPS). A compositionally biased stretch (low complexity) spans 46–56 (SAPSAAASTPV). The MEIS N-terminal domain maps to 96–179 (GSECITSASF…MHSDNLLRND (84 aa)). The segment at residues 291-350 (KRGVLPKHATNIMRSWLFQHLMHPYPTEDEKRQIAAQTNLTLLQVNNWFINARRRILQPM) is a DNA-binding region (homeobox). Disordered stretches follow at residues 351–371 (LDASNPDPAPKAKKIKSQHRP), 386–405 (QQQGGAPGTNPDGSINLDNL), and 422–472 (MAAH…DSLE). A compositionally biased stretch (basic residues) spans 361–371 (KAKKIKSQHRP). A compositionally biased stretch (acidic residues) spans 429 to 454 (LDGTEEEDEDEMEEEEEEELEEEVDE).

It belongs to the TALE/MEIS homeobox family.

Its subcellular location is the nucleus. The chain is Homeobox protein PKNOX2 (PKNOX2) from Homo sapiens (Human).